The chain runs to 738 residues: Alcohol dehydrogenase (quinone), dehydrogenase subunit (738 aa).

Residues 1–35 (MISAVFGKRRSLSRTLTAGTICAALISGYATMASA) form the signal peptide. Glu-97 contacts pyrroloquinoline quinone. Cys-143 and Cys-144 are oxidised to a cystine. Residue Arg-149 participates in pyrroloquinoline quinone binding. Glu-217 contacts Ca(2+). Thr-278 contacts pyrroloquinoline quinone. Residues Asn-298 and Asp-343 each coordinate Ca(2+). Asp-343 acts as the Proton acceptor in catalysis. Residues Lys-370 and Ile-584 each contribute to the pyrroloquinoline quinone site. A Cytochrome c domain is found at 634 to 738 (FDSKRTDNGY…NADGIPEQLP (105 aa)). 4 residues coordinate heme c: Cys-650, Cys-653, His-654, and Met-693.

The protein belongs to the bacterial PQQ dehydrogenase family. In terms of assembly, the alcohol dehydrogenase multicomponent enzyme system is composed of a dehydrogenase subunit I (AdhA) and a cytochrome c subunit II (AdhB). Requires pyrroloquinoline quinone as cofactor. The cofactor is Ca(2+). Heme c serves as cofactor.

The protein resides in the cell membrane. The enzyme catalyses ethanol + a ubiquinone = a ubiquinol + acetaldehyde. In terms of biological role, dehydrogenase component of the alcohol dehydrogenase multicomponent enzyme system which is involved in the production of acetic acid and in the ethanol oxidase respiratory chain. Quinohemoprotein alcohol dehydrogenase (ADH) catalyzes the oxidation of ethanol to acetaldehyde by transferring electrons to the ubiquinone embedded in the membrane phospholipids. The electrons transfer from ethanol to membranous ubiquinone occurs from pyrroloquinoline quinone (PQQ) to one heme c in subunit I (AdhA), and finally to two heme c in subunit II (AdhB). Besides ubiquinone reduction, ADH also has a ubiquinol (QH2) oxidation reaction which mediates electron transfer from ubiquinol to the non-energy generating bypass oxidase system. The electrons transfer occurs from ubiquinol (QH2) to the additional heme c within subunit II (AdhB). The polypeptide is Alcohol dehydrogenase (quinone), dehydrogenase subunit (adhA) (Gluconacetobacter polyoxogenes (Acetobacter polyoxogenes)).